The sequence spans 564 residues: Septation ring formation regulator EzrA (564 aa).

The Extracellular segment spans residues 1 to 4; it reads MVLY. A helical membrane pass occupies residues 5 to 23; that stretch reads IILAIIVIILIAVGVLFYL. At 24–564 the chain is on the cytoplasmic side; it reads RSNKRQIIEK…KHIEEEVIKQ (541 aa). 5 coiled-coil regions span residues 99–138, 190–223, 271–300, 350–435, and 471–550; these read SFNASQSEIDDANELMDSYEQSYQQQLEDVNEIIALYKDN, DGNYVQAHNHIAALNEQMKQLRSYMEEIPELIRE, LISRLELEEANDKLANINDKLDDMYDLIEH, VRQF…RRLL, and VKQL…ESVE.

It belongs to the EzrA family.

The protein resides in the cell membrane. In terms of biological role, negative regulator of FtsZ ring formation; modulates the frequency and position of FtsZ ring formation. Inhibits FtsZ ring formation at polar sites. Interacts either with FtsZ or with one of its binding partners to promote depolymerization. The protein is Septation ring formation regulator EzrA of Staphylococcus aureus (strain JH1).